The following is a 133-amino-acid chain: Phosphoribosyl-AMP cyclohydrolase (133 aa).

Aspartate 77 serves as a coordination point for Mg(2+). Cysteine 78 contributes to the Zn(2+) binding site. Positions 79 and 81 each coordinate Mg(2+). Zn(2+) contacts are provided by cysteine 95 and cysteine 102.

Belongs to the PRA-CH family. Homodimer. Mg(2+) is required as a cofactor. The cofactor is Zn(2+).

Its subcellular location is the cytoplasm. It carries out the reaction 1-(5-phospho-beta-D-ribosyl)-5'-AMP + H2O = 1-(5-phospho-beta-D-ribosyl)-5-[(5-phospho-beta-D-ribosylamino)methylideneamino]imidazole-4-carboxamide. It participates in amino-acid biosynthesis; L-histidine biosynthesis; L-histidine from 5-phospho-alpha-D-ribose 1-diphosphate: step 3/9. Functionally, catalyzes the hydrolysis of the adenine ring of phosphoribosyl-AMP. The polypeptide is Phosphoribosyl-AMP cyclohydrolase (Azotobacter vinelandii (strain DJ / ATCC BAA-1303)).